We begin with the raw amino-acid sequence, 138 residues long: Small ribosomal subunit protein uS11c (138 aa).

The segment at 1 to 22 is disordered; it reads MAKSIPRISSRRNGRIGSGNNV.

The protein belongs to the universal ribosomal protein uS11 family. In terms of assembly, part of the 30S ribosomal subunit.

The protein resides in the plastid. This chain is Small ribosomal subunit protein uS11c, found in Cuscuta reflexa (Southern Asian dodder).